Here is a 251-residue protein sequence, read N- to C-terminus: Extracellular superoxide dismutase [Cu-Zn] (251 aa).

The N-terminal stretch at 1–15 is a signal peptide; that stretch reads MLAFLFYGLLLAACG. The propeptide occupies 16 to 24; sequence SVTMSNPGE. 2 disulfides stabilise this stretch: Cys-77-Cys-222 and Cys-139-Cys-221. An N-linked (GlcNAc...) asparagine glycan is attached at Asn-121. Cu cation-binding residues include His-128, His-130, and His-145. Residues His-145, His-153, His-156, and Asp-159 each coordinate Zn(2+). His-195 lines the Cu cation pocket. The interval 230 to 251 is disordered; it reads AAWESQTKERKKRRRESECKTT.

It belongs to the Cu-Zn superoxide dismutase family. Homotetramer. Directly interacts with ATP7A/MNK; this interaction is copper-dependent and is required for SOD3 activity. Cu cation is required as a cofactor. Zn(2+) serves as cofactor.

The protein localises to the secreted. It is found in the extracellular space. It localises to the golgi apparatus. The protein resides in the trans-Golgi network. The enzyme catalyses 2 superoxide + 2 H(+) = H2O2 + O2. Functionally, protect the extracellular space from toxic effect of reactive oxygen intermediates by converting superoxide radicals into hydrogen peroxide and oxygen. This is Extracellular superoxide dismutase [Cu-Zn] (Sod3) from Mus musculus (Mouse).